Reading from the N-terminus, the 224-residue chain is 3-dehydroquinate dehydratase (224 aa).

Residues 30–32 (EWR) and R62 contribute to the 3-dehydroquinate site. The Proton donor/acceptor role is filled by H118. K143 (schiff-base intermediate with substrate) is an active-site residue. 3-dehydroquinate is bound by residues R186, S205, and Q209.

It belongs to the type-I 3-dehydroquinase family. Homodimer.

It carries out the reaction 3-dehydroquinate = 3-dehydroshikimate + H2O. Its pathway is metabolic intermediate biosynthesis; chorismate biosynthesis; chorismate from D-erythrose 4-phosphate and phosphoenolpyruvate: step 3/7. Functionally, involved in the third step of the chorismate pathway, which leads to the biosynthesis of aromatic amino acids. Catalyzes the cis-dehydration of 3-dehydroquinate (DHQ) and introduces the first double bond of the aromatic ring to yield 3-dehydroshikimate. In Streptococcus suis (strain 98HAH33), this protein is 3-dehydroquinate dehydratase.